The following is a 1263-amino-acid chain: DNA-directed RNA polymerase subunit beta (1263 aa).

The protein belongs to the RNA polymerase beta chain family. The RNAP catalytic core consists of 2 alpha, 1 beta, 1 beta' and 1 omega subunit. When a sigma factor is associated with the core the holoenzyme is formed, which can initiate transcription.

The catalysed reaction is RNA(n) + a ribonucleoside 5'-triphosphate = RNA(n+1) + diphosphate. In terms of biological role, DNA-dependent RNA polymerase catalyzes the transcription of DNA into RNA using the four ribonucleoside triphosphates as substrates. This Thermotoga petrophila (strain ATCC BAA-488 / DSM 13995 / JCM 10881 / RKU-1) protein is DNA-directed RNA polymerase subunit beta.